A 702-amino-acid polypeptide reads, in one-letter code: Phosphoglycerol transferase I (702 aa).

The next 3 helical transmembrane spans lie at W3–L25, G73–R95, and G102–Y124.

This sequence belongs to the OpgB family.

It localises to the cell inner membrane. It catalyses the reaction a phosphatidylglycerol + a membrane-derived-oligosaccharide D-glucose = a 1,2-diacyl-sn-glycerol + a membrane-derived-oligosaccharide 6-(glycerophospho)-D-glucose.. Its pathway is glycan metabolism; osmoregulated periplasmic glucan (OPG) biosynthesis. Functionally, transfers a phosphoglycerol residue from phosphatidylglycerol to the membrane-bound nascent glucan backbones. This chain is Phosphoglycerol transferase I, found in Xanthomonas campestris pv. campestris (strain ATCC 33913 / DSM 3586 / NCPPB 528 / LMG 568 / P 25).